A 57-amino-acid chain; its full sequence is uncharacterized protein (57 aa).

Residues 3–23 (PLTLLIIIGGVILGNELIISL) form a helical membrane-spanning segment. The disordered stretch occupies residues 38-57 (KHKHKTQENYETFASDKKRT).

Its subcellular location is the host membrane. This is an uncharacterized protein from Acidianus bottle-shaped virus (isolate Italy/Pozzuoli) (ABV).